A 211-amino-acid polypeptide reads, in one-letter code: Tudor-interacting repair regulator protein (211 aa).

Glycyl lysine isopeptide (Lys-Gly) (interchain with G-Cter in ubiquitin) cross-links involve residues K10 and K151. The tract at residues 118–205 (TLEQLHAVEI…TEKQKKALEK (88 aa)) is interaction with PXN.

Belongs to the Nudix hydrolase family. TIRR subfamily. In terms of assembly, homodimer. Interacts with TP53BP1 (via the Tudor-like domain); interaction is abolished following DNA damage and TP53BP1 phosphorylation by ATM. Interacts (via the cytoplasmic part) with SDC4. Interacts with TGFB1I1 and PXN.

The protein resides in the nucleus. Key regulator of TP53BP1 required to stabilize TP53BP1 and regulate its recruitment to chromatin. In absence of DNA damage, interacts with the tandem Tudor-like domain of TP53BP1, masking the region that binds histone H4 dimethylated at 'Lys-20' (H4K20me2), thereby preventing TP53BP1 recruitment to chromatin and maintaining TP53BP1 localization to the nucleus. Following DNA damage, ATM-induced phosphorylation of TP53BP1 and subsequent recruitment of RIF1 leads to dissociate NUDT16L1/TIRR from TP53BP1, unmasking the tandem Tudor-like domain and allowing recruitment of TP53BP1 to DNA double strand breaks (DSBs). Binds U8 snoRNA. The chain is Tudor-interacting repair regulator protein from Homo sapiens (Human).